A 119-amino-acid chain; its full sequence is Large ribosomal subunit protein bL17 (119 aa).

This sequence belongs to the bacterial ribosomal protein bL17 family. In terms of assembly, part of the 50S ribosomal subunit. Contacts protein L32.

This is Large ribosomal subunit protein bL17 from Ureaplasma parvum serovar 3 (strain ATCC 27815 / 27 / NCTC 11736).